The following is a 931-amino-acid chain: 3'-5' exonuclease DinG (931 aa).

The Exonuclease domain maps to Val7–Ile162. Positions Leu250–Asn510 constitute a Helicase ATP-binding domain. Ala284 to Thr291 provides a ligand contact to ATP. The DEAH box motif lies at Asp462–His465. Residues Asp741–Lys897 form the Helicase C-terminal domain.

Belongs to the helicase family. DinG subfamily. Type 2 sub-subfamily.

It localises to the cytoplasm. Functionally, 3'-5' exonuclease. In Bacillus subtilis (strain 168), this protein is 3'-5' exonuclease DinG.